The primary structure comprises 338 residues: Biotin synthase (338 aa).

One can recognise a Radical SAM core domain in the interval 59 to 284 (EEVEIEGIVS…RTTLRFAGGR (226 aa)). Positions 74, 78, and 81 each coordinate [4Fe-4S] cluster. The [2Fe-2S] cluster site is built by Cys117, Cys209, and Arg279.

This sequence belongs to the radical SAM superfamily. Biotin synthase family. Homodimer. The cofactor is [4Fe-4S] cluster. [2Fe-2S] cluster serves as cofactor.

The catalysed reaction is (4R,5S)-dethiobiotin + (sulfur carrier)-SH + 2 reduced [2Fe-2S]-[ferredoxin] + 2 S-adenosyl-L-methionine = (sulfur carrier)-H + biotin + 2 5'-deoxyadenosine + 2 L-methionine + 2 oxidized [2Fe-2S]-[ferredoxin]. Its pathway is cofactor biosynthesis; biotin biosynthesis; biotin from 7,8-diaminononanoate: step 2/2. Catalyzes the conversion of dethiobiotin (DTB) to biotin by the insertion of a sulfur atom into dethiobiotin via a radical-based mechanism. The polypeptide is Biotin synthase (Corynebacterium urealyticum (strain ATCC 43042 / DSM 7109)).